Consider the following 629-residue polypeptide: MDLEKLHDPSLIKSMTKQELEQLAEEIRQFLIEKLSITGGHLGPNLGVVELTLALHSLFDSPKDKLIWDVGHQAYVHKILTGRAGQFDQLRQYKGLCGFPKRDESEHDVWETGHSSTSLSAAMGMATARDLKGTDENVIAIIGDGALTGGMALEALNHIGHEQKDLIVVLNDNEMSIAPNVGALHNVLGRLRTAGKYQKAKEDLEMLIKKIPAFGGKLAQAAERVKDSLKYLLVSGIFFEEMGFTYLGPVDGHDLDDLMENLKYAKKTKGPVLIHVLTKKGKGYAPAENDEKGTWHGVGHYKIESGELVKKPAPPSYSGVFAETLKKIARNDPRIVALTAAMPGGTKLDQFAKEFPDRMFDVGIAEQHATTMAGGLATQGLKPVFAVYSTFLQRGYDQVVHDICRQNLNVFFAIDRAGLVGADGETHQGVFDIAYLRHLPNMKILMPKDENELQHMVYTAIQYEGGPIAVRYPRGNGYGIKMDEVLKEIPIGSWEVLQEGTDACILTFGTMIPVAEQASKELSQQGYSIRLINARSVKPLDEAMLHEIAKSGRPVLTLEETAVQGSFGSAVLEFFHDHGYHNVVTQRMGIPDRFIEHGSVSELLEEIGLTSSQVANQLSKLLPRKQKRA.

Residues histidine 72 and 113–115 (GHS) each bind thiamine diphosphate. Aspartate 144 provides a ligand contact to Mg(2+). Residues 145–146 (GA), asparagine 173, tyrosine 284, and glutamate 366 contribute to the thiamine diphosphate site. Asparagine 173 provides a ligand contact to Mg(2+).

This sequence belongs to the transketolase family. DXPS subfamily. Homodimer. The cofactor is Mg(2+). Requires thiamine diphosphate as cofactor.

It catalyses the reaction D-glyceraldehyde 3-phosphate + pyruvate + H(+) = 1-deoxy-D-xylulose 5-phosphate + CO2. It participates in metabolic intermediate biosynthesis; 1-deoxy-D-xylulose 5-phosphate biosynthesis; 1-deoxy-D-xylulose 5-phosphate from D-glyceraldehyde 3-phosphate and pyruvate: step 1/1. Its function is as follows. Catalyzes the acyloin condensation reaction between C atoms 2 and 3 of pyruvate and glyceraldehyde 3-phosphate to yield 1-deoxy-D-xylulose-5-phosphate (DXP). This is 1-deoxy-D-xylulose-5-phosphate synthase from Halalkalibacterium halodurans (strain ATCC BAA-125 / DSM 18197 / FERM 7344 / JCM 9153 / C-125) (Bacillus halodurans).